A 262-amino-acid polypeptide reads, in one-letter code: Abhydrolase domain-containing protein ACTT2 (262 aa).

The Peroxisomal targeting signal type 1 motif lies at 260–262 (SKL).

This sequence belongs to the AB hydrolase superfamily. AKT2 hydrolase family.

The protein resides in the peroxisome. Its pathway is mycotoxin biosynthesis. Abhydrolase domain-containing protein; part of the gene clusters that mediate the biosynthesis of the host-selective toxins (HSTs) ACT-toxins responsible for brown spot of tangerine disease by the tangerine pathotype which affects tangerines and mandarins. ACT-toxins consist of three moieties, 9,10-epoxy-8-hydroxy-9-methyl-decatrienoic acid (EDA), valine and a polyketide. ACT-toxin I is toxic to both citrus and pear; toxin II the 5''-deoxy derivative of ACT-toxin I, is highly toxic to pear and slightly toxic to citrus. On cellular level, ACT-toxins affect plasma membrane of susceptible cells and cause a sudden increase in loss of K(+) after a few minutes of toxin treatment. The acyl-CoA ligase ACTT1, the hydrolase ACTT2, the enoyl-CoA hydratases ACTT3 and ACTT6, and the acyl-CoA synthetase ACTT5 are all involved in the biosynthesis of the AK-, AF- and ACT-toxin common 9,10-epoxy-8-hydroxy-9-methyl-decatrienoic acid (EDA) structural moiety. The exact role of each enzyme, and of additional enzymes identified within the AF-toxin clusters have still to be determined. On the other hand, ACTTS1 to ACTTS4 are specific to the tangerine pathotype. The function of ACTTS3 is to elongate the polyketide chain portion of ACT-toxin that is unique to this toxin. The enoyl-reductase ACTTS2 might complement the missing enoyl-reductase (ER) domain in ACTTS3 in the synthesis of the polyketide portion of ACT-toxin. The roles of the nonribosomal peptide synthetases-related proteins ACTTS1 and ACTTS4 have also still not been elucidated. The protein is Abhydrolase domain-containing protein ACTT2 of Alternaria alternata (Alternaria rot fungus).